The sequence spans 443 residues: tRNA modification GTPase MnmE (443 aa).

Residues R23, E82, and K121 each coordinate (6S)-5-formyl-5,6,7,8-tetrahydrofolate. The TrmE-type G domain maps to 215-364; it reads GTSIVLAGHP…LKQFIQKWMQ (150 aa). N225 is a binding site for K(+). GTP is bound by residues 225 to 230, 244 to 250, and 269 to 272; these read NVGKSS, TDIPGTT, and DSAG. A Mg(2+)-binding site is contributed by S229. K(+)-binding residues include T244, I246, and T249. A Mg(2+)-binding site is contributed by T250. Residue K443 coordinates (6S)-5-formyl-5,6,7,8-tetrahydrofolate.

It belongs to the TRAFAC class TrmE-Era-EngA-EngB-Septin-like GTPase superfamily. TrmE GTPase family. Homodimer. Heterotetramer of two MnmE and two MnmG subunits. It depends on K(+) as a cofactor.

The protein resides in the cytoplasm. Its function is as follows. Exhibits a very high intrinsic GTPase hydrolysis rate. Involved in the addition of a carboxymethylaminomethyl (cmnm) group at the wobble position (U34) of certain tRNAs, forming tRNA-cmnm(5)s(2)U34. The polypeptide is tRNA modification GTPase MnmE (Chlamydia caviae (strain ATCC VR-813 / DSM 19441 / 03DC25 / GPIC) (Chlamydophila caviae)).